Consider the following 406-residue polypeptide: Formate-dependent phosphoribosylglycinamide formyltransferase (406 aa).

N(1)-(5-phospho-beta-D-ribosyl)glycinamide is bound by residues 27 to 28 and glutamate 87; that span reads EL. Residues arginine 120, lysine 162, 167 to 172, 202 to 205, and glutamate 210 each bind ATP; these read SSGKGQ and EGFI. The ATP-grasp domain occupies 125–320; sequence RLAAETLGLP…EFELHARALL (196 aa). Residues glutamate 279 and glutamate 291 each contribute to the Mg(2+) site. Residues aspartate 298, lysine 367, and 374–375 contribute to the N(1)-(5-phospho-beta-D-ribosyl)glycinamide site; that span reads RR.

Belongs to the PurK/PurT family. In terms of assembly, homodimer.

The enzyme catalyses N(1)-(5-phospho-beta-D-ribosyl)glycinamide + formate + ATP = N(2)-formyl-N(1)-(5-phospho-beta-D-ribosyl)glycinamide + ADP + phosphate + H(+). The protein operates within purine metabolism; IMP biosynthesis via de novo pathway; N(2)-formyl-N(1)-(5-phospho-D-ribosyl)glycinamide from N(1)-(5-phospho-D-ribosyl)glycinamide (formate route): step 1/1. Its function is as follows. Involved in the de novo purine biosynthesis. Catalyzes the transfer of formate to 5-phospho-ribosyl-glycinamide (GAR), producing 5-phospho-ribosyl-N-formylglycinamide (FGAR). Formate is provided by PurU via hydrolysis of 10-formyl-tetrahydrofolate. The sequence is that of Formate-dependent phosphoribosylglycinamide formyltransferase from Bordetella parapertussis (strain 12822 / ATCC BAA-587 / NCTC 13253).